We begin with the raw amino-acid sequence, 372 residues long: Glutamate 5-kinase (372 aa).

Position 14 (Lys14) interacts with ATP. Substrate contacts are provided by Ser54, Asp141, and Asn153. Thr173–Asp174 lines the ATP pocket. Residues Arg280–Met358 form the PUA domain.

Belongs to the glutamate 5-kinase family.

The protein resides in the cytoplasm. It catalyses the reaction L-glutamate + ATP = L-glutamyl 5-phosphate + ADP. Its pathway is amino-acid biosynthesis; L-proline biosynthesis; L-glutamate 5-semialdehyde from L-glutamate: step 1/2. In terms of biological role, catalyzes the transfer of a phosphate group to glutamate to form L-glutamate 5-phosphate. This chain is Glutamate 5-kinase, found in Burkholderia ambifaria (strain ATCC BAA-244 / DSM 16087 / CCUG 44356 / LMG 19182 / AMMD) (Burkholderia cepacia (strain AMMD)).